The sequence spans 102 residues: UPF0251 protein ASA_1331 (102 aa).

This sequence belongs to the UPF0251 family.

This chain is UPF0251 protein ASA_1331, found in Aeromonas salmonicida (strain A449).